Consider the following 801-residue polypeptide: Phenylalanine--tRNA ligase beta subunit (801 aa).

A tRNA-binding domain is found at 39–147 (GGGLDEVVVA…TDLPLGVPVF (109 aa)). Residues 401–477 (LPRRTVRFRV…RLNGYNNIPV (77 aa)) enclose the B5 domain. Positions 455, 461, 464, and 465 each coordinate Mg(2+). The FDX-ACB domain occupies 708–801 (SRFPDTFRDI…LVKKLAVTIR (94 aa)).

The protein belongs to the phenylalanyl-tRNA synthetase beta subunit family. Type 1 subfamily. Tetramer of two alpha and two beta subunits. Mg(2+) is required as a cofactor.

Its subcellular location is the cytoplasm. The enzyme catalyses tRNA(Phe) + L-phenylalanine + ATP = L-phenylalanyl-tRNA(Phe) + AMP + diphosphate + H(+). This is Phenylalanine--tRNA ligase beta subunit from Geobacter metallireducens (strain ATCC 53774 / DSM 7210 / GS-15).